The chain runs to 310 residues: Aspartate carbamoyltransferase catalytic subunit (310 aa).

2 residues coordinate carbamoyl phosphate: R58 and T59. L-aspartate is bound at residue K87. The carbamoyl phosphate site is built by R108, H136, and Q139. L-aspartate contacts are provided by R169 and R229. Carbamoyl phosphate-binding residues include L268 and P269.

The protein belongs to the aspartate/ornithine carbamoyltransferase superfamily. ATCase family. Heterododecamer (2C3:3R2) of six catalytic PyrB chains organized as two trimers (C3), and six regulatory PyrI chains organized as three dimers (R2).

It carries out the reaction carbamoyl phosphate + L-aspartate = N-carbamoyl-L-aspartate + phosphate + H(+). The protein operates within pyrimidine metabolism; UMP biosynthesis via de novo pathway; (S)-dihydroorotate from bicarbonate: step 2/3. In terms of biological role, catalyzes the condensation of carbamoyl phosphate and aspartate to form carbamoyl aspartate and inorganic phosphate, the committed step in the de novo pyrimidine nucleotide biosynthesis pathway. This Leptospira biflexa serovar Patoc (strain Patoc 1 / Ames) protein is Aspartate carbamoyltransferase catalytic subunit.